Reading from the N-terminus, the 265-residue chain is Mlc titration factor A (265 aa).

Zn(2+) contacts are provided by His-111, His-148, His-152, and Glu-211.

This sequence belongs to the MtfA family. Interacts with Mlc. The cofactor is Zn(2+).

The protein resides in the cytoplasm. Functionally, involved in the modulation of the activity of the glucose-phosphotransferase system (glucose-PTS). Interacts with the transcriptional repressor Mlc, preventing its interaction with DNA and leading to the modulation of expression of genes regulated by Mlc, including ptsG, which encodes the PTS system glucose-specific EIICB component. In terms of biological role, shows zinc-dependent metallopeptidase activity. In Cronobacter sakazakii (strain ATCC BAA-894) (Enterobacter sakazakii), this protein is Mlc titration factor A.